The chain runs to 145 residues: Putative pre-16S rRNA nuclease (145 aa).

Belongs to the YqgF nuclease family.

The protein resides in the cytoplasm. Its function is as follows. Could be a nuclease involved in processing of the 5'-end of pre-16S rRNA. The chain is Putative pre-16S rRNA nuclease from Limosilactobacillus fermentum (strain NBRC 3956 / LMG 18251) (Lactobacillus fermentum).